Consider the following 872-residue polypeptide: Alanine--tRNA ligase (872 aa).

4 residues coordinate Zn(2+): H567, H571, C669, and H673.

The protein belongs to the class-II aminoacyl-tRNA synthetase family. The cofactor is Zn(2+).

The protein localises to the cytoplasm. It carries out the reaction tRNA(Ala) + L-alanine + ATP = L-alanyl-tRNA(Ala) + AMP + diphosphate. Its function is as follows. Catalyzes the attachment of alanine to tRNA(Ala) in a two-step reaction: alanine is first activated by ATP to form Ala-AMP and then transferred to the acceptor end of tRNA(Ala). Also edits incorrectly charged Ser-tRNA(Ala) and Gly-tRNA(Ala) via its editing domain. This chain is Alanine--tRNA ligase, found in Streptococcus pneumoniae (strain Hungary19A-6).